We begin with the raw amino-acid sequence, 409 residues long: Protein ROOT PRIMORDIUM DEFECTIVE 1 (409 aa).

The PORR domain maps to 47-386 (VRDHGYDNYM…RLAELVLMSP (340 aa)).

In terms of tissue distribution, expressed in roots, hypocotyls, cotyledons and shoot apex.

Its function is as follows. Involved in pre-arranging the maintenance of the active cell proliferation during root primordium development. Does not seem to be involved in cell cycle progression. This chain is Protein ROOT PRIMORDIUM DEFECTIVE 1 (RPD1), found in Arabidopsis thaliana (Mouse-ear cress).